We begin with the raw amino-acid sequence, 125 residues long: Small ribosomal subunit protein uS12m (125 aa).

Residues 1-50 are disordered; that stretch reads MPSLNQLIRHGREEKRRTDRTRALDQCPQKQGVCPRVSTRTPKKPNSAPR. The segment covering 10 to 23 has biased composition (basic and acidic residues); that stretch reads HGREEKRRTDRTRA.

This sequence belongs to the universal ribosomal protein uS12 family.

Its subcellular location is the mitochondrion. Protein S12 is involved in the translation initiation step. This chain is Small ribosomal subunit protein uS12m (RPS12), found in Petunia hybrida (Petunia).